Here is a 147-residue protein sequence, read N- to C-terminus: Small ribosomal subunit protein bS6 (147 aa).

The segment at 107-147 (KEGRERKARPARAERRDDTEAEDLSDEEGVEAEDFEEEQGV) is disordered. Over residues 125–147 (TEAEDLSDEEGVEAEDFEEEQGV) the composition is skewed to acidic residues.

This sequence belongs to the bacterial ribosomal protein bS6 family.

In terms of biological role, binds together with bS18 to 16S ribosomal RNA. The protein is Small ribosomal subunit protein bS6 of Cellvibrio japonicus (strain Ueda107) (Pseudomonas fluorescens subsp. cellulosa).